Consider the following 887-residue polypeptide: Amyloid-beta-like protein (887 aa).

Residues 1-27 form the signal peptide; it reads MCAALRRNLLLRSLWVVLAIGTAQVQA. Topologically, residues 28-813 are extracellular; sequence ASPRWEPQIA…HAAKEGRNVY (786 aa). The GFLD subdomain stretch occupies residues 30–133; it reads PRWEPQIAVL…KPFRCLGPFQ (104 aa). The 170-residue stretch at 30-199 folds into the E1 domain; the sequence is PRWEPQIAVL…SGVEFVCCPK (170 aa). Intrachain disulfides connect C40/C70, C81/C128, C106/C116, C143/C197, C154/C184, and C168/C196. Residues 141-199 form a cuBD subdomain region; the sequence is EGCLFDHIHNASRCWPFVRWNQTGAAACQERGMQMRSFAMLLPCGISVFSGVEFVCCPK. N150 and N161 each carry an N-linked (GlcNAc...) asparagine glycan. Disordered regions lie at residues 225–365 and 377–396; these read NDEL…STPQ and NSGNSGTGAGAPPSTAQPTS. 2 N-linked (GlcNAc...) asparagine glycosylation sites follow: N237 and N240. Acidic residues predominate over residues 246–267; sequence NEDDLDDEDDLMGDDEEDDMVA. Residues 268–292 are compositionally biased toward low complexity; that stretch reads DEAATAGGSPNTGSSGDSNSGSLDD. Over residues 293-321 the composition is skewed to acidic residues; that stretch reads INAEYDSGEEGDNYEEDGAGSESEAEVEA. A compositionally biased stretch (low complexity) spans 329–352; that stretch reads AKVVSLKSDSSSPSSAPVAPAPEK. The E2 domain occupies 395-597; it reads TSDPYFTHFD…AKIAQLMNDY (203 aa). The N-linked (GlcNAc...) asparagine glycan is linked to N574. A disordered region spans residues 675 to 743; that stretch reads KSQVAEQQSQ…TEYGEATVSS (69 aa). Residues 681–699 are compositionally biased toward low complexity; the sequence is QQSQPTQSSTQSQAQQQQQ. The chain crosses the membrane as a helical span at residues 814-834; sequence FTLSFAGIALMAAVFVGVAVA. Residues 835 to 887 are Cytoplasmic-facing; that stretch reads KWRTSRSPHAQGFIEVDQNVTTHHPIVREEKIVPNMQINGYENPTYKYFEVKE. The short motif at 875–880 is the YENPXY motif element; it reads YENPTY.

It belongs to the APP family. In terms of assembly, interacts (via the intracellular domain, ICD) with APP-BP1. As to expression, expressed in postmitotic neurons in the central and peripheral nervous systems. Within the nervous system, transcripts are not observed in neuroblasts, newly generated neurons and at least one class of presumed glial cells.

The protein resides in the membrane. Functionally, during development, plays a role in the regulation of the neddylation pathway. Appl and APP-BP1 interact antagonistically during development. In Drosophila melanogaster (Fruit fly), this protein is Amyloid-beta-like protein (Appl).